Here is a 499-residue protein sequence, read N- to C-terminus: Phenylalanine--tRNA ligase alpha subunit (499 aa).

L-phenylalanine is bound by residues Thr-342, 381 to 383 (QID), and Phe-422. Residue Glu-424 participates in Mg(2+) binding. Phe-447 provides a ligand contact to L-phenylalanine.

The protein belongs to the class-II aminoacyl-tRNA synthetase family. Phe-tRNA synthetase alpha subunit type 2 subfamily. As to quaternary structure, tetramer of two alpha and two beta subunits. It depends on Mg(2+) as a cofactor.

It is found in the cytoplasm. The catalysed reaction is tRNA(Phe) + L-phenylalanine + ATP = L-phenylalanyl-tRNA(Phe) + AMP + diphosphate + H(+). This Thermococcus gammatolerans (strain DSM 15229 / JCM 11827 / EJ3) protein is Phenylalanine--tRNA ligase alpha subunit.